A 522-amino-acid polypeptide reads, in one-letter code: Sugar transport protein 1 (522 aa).

Over 1–22 (MPAGGFVVGDGQKAYPGKLTPF) the chain is Cytoplasmic. A helical transmembrane segment spans residues 23-43 (VLFTCVVAAMGGLIFGYDIGI). Residues 44–79 (SGGVTSMPSFLKRFFPSVYRKQQEDASTNQYCQYDS) are Extracellular-facing. A helical transmembrane segment spans residues 80–100 (PTLTMFTSSLYLAALISSLVA). The Cytoplasmic portion of the chain corresponds to 101–117 (STVTRKFGRRLSMLFGG). Residues 118 to 138 (ILFCAGALINGFAKHVWMLIV) form a helical membrane-spanning segment. Over 139–140 (GR) the chain is Extracellular. A helical membrane pass occupies residues 141 to 161 (ILLGFGIGFANQAVPLYLSEM). The Cytoplasmic segment spans residues 162-171 (APYKYRGALN). Residues 172 to 192 (IGFQLSITIGILVAEVLNYFF) traverse the membrane as a helical segment. Topologically, residues 193–202 (AKIKGGWGWR) are extracellular. A helical membrane pass occupies residues 203–223 (LSLGGAVVPALIITIGSLVLP). At 224 to 289 (DTPNSMIERG…YRPHLTMAVM (66 aa)) the chain is on the cytoplasmic side. Phosphoserine is present on serine 252. A helical transmembrane segment spans residues 290-310 (IPFFQQLTGINVIMFYAPVLF). The Extracellular segment spans residues 311-321 (NTIGFTTDASL). The chain crosses the membrane as a helical span at residues 322 to 342 (MSAVVTGSVNVAATLVSIYGV). At 343–348 (DRWGRR) the chain is on the cytoplasmic side. The chain crosses the membrane as a helical span at residues 349–369 (FLFLEGGTQMLICQAVVAACI). Over 370-384 (GAKFGVDGTPGELPK) the chain is Extracellular. Residues 385–405 (WYAIVVVTFICIYVAGFAWSW) form a helical membrane-spanning segment. Over 406–427 (GPLGWLVPSEIFPLEIRSAAQS) the chain is Cytoplasmic. Residues 428–448 (ITVSVNMIFTFIIAQIFLTML) form a helical membrane-spanning segment. At 449–452 (CHLK) the chain is on the extracellular side. Residues 453–473 (FGLFLVFAFFVVVMSIFVYIF) form a helical membrane-spanning segment. The Cytoplasmic portion of the chain corresponds to 474-522 (LPETKGIPIEEMGQVWRSHWYWSRFVEDGEYGNALEMGKNSNQAGTKHV).

The protein belongs to the major facilitator superfamily. Sugar transporter (TC 2.A.1.1) family. In terms of tissue distribution, mostly expressed in young leaves, especially in guard cells (at protein level). Also present in roots.

Its subcellular location is the cell membrane. Major hexose transporter. Mediates an active uptake of hexoses, by sugar/hydrogen symport. Can transport glucose, 3-O-methylglucose, fructose, xylose, mannose, galactose, fucose, 2-deoxyglucose and arabinose. Confers sensitivity to galactose in seedlings. This chain is Sugar transport protein 1 (STP1), found in Arabidopsis thaliana (Mouse-ear cress).